Here is a 339-residue protein sequence, read N- to C-terminus: Flap endonuclease 1 (339 aa).

The N-domain stretch occupies residues 1–99 (MGVNLKEIVD…VAWEKRKKHK (99 aa)). Mg(2+) is bound by residues Asp-29, Asp-81, Glu-153, Glu-155, Asp-174, Asp-176, and Asp-237. The segment at 117-258 (EAIKYAKSLG…TAIEIVKRFG (142 aa)) is I-domain. The tract at residues 329–337 (NQKTLFSFF) is interaction with PCNA.

This sequence belongs to the XPG/RAD2 endonuclease family. FEN1 subfamily. In terms of assembly, interacts with PCNA. PCNA stimulates the nuclease activity without altering cleavage specificity. The cofactor is Mg(2+).

Its function is as follows. Structure-specific nuclease with 5'-flap endonuclease and 5'-3' exonuclease activities involved in DNA replication and repair. During DNA replication, cleaves the 5'-overhanging flap structure that is generated by displacement synthesis when DNA polymerase encounters the 5'-end of a downstream Okazaki fragment. Binds the unpaired 3'-DNA end and kinks the DNA to facilitate 5' cleavage specificity. Cleaves one nucleotide into the double-stranded DNA from the junction in flap DNA, leaving a nick for ligation. Also involved in the base excision repair (BER) pathway. Acts as a genome stabilization factor that prevents flaps from equilibrating into structures that lead to duplications and deletions. Also possesses 5'-3' exonuclease activity on nicked or gapped double-stranded DNA. The sequence is that of Flap endonuclease 1 from Nanoarchaeum equitans (strain Kin4-M).